The chain runs to 2567 residues: Unconventional myosin-XVIIIb (2567 aa).

The disordered stretch occupies residues 41 to 508 (LVRGTEKEAK…SRDSDQAPED (468 aa)). The segment covering 44–54 (GTEKEAKEARQ) has biased composition (basic and acidic residues). The segment covering 71 to 104 (SISQPNSKSSSGTRSGSQQISQDDQSSSPGSSDI) has biased composition (low complexity). Composition is skewed to basic and acidic residues over residues 105–116 (LGKESEGSRSPD) and 160–176 (LDPD…HDAP). Polar residues predominate over residues 196-206 (SRTPCGSQAST). Basic and acidic residues-rich tracts occupy residues 251 to 265 (TELK…DRQG), 278 to 287 (RPGKAEKEGA), and 326 to 349 (SKWD…EKTG). Polar residues predominate over residues 350 to 362 (EPQTQMEKTSQVQ). Composition is skewed to basic and acidic residues over residues 367 to 377 (DDLRMGEKAGE), 410 to 420 (SQTEKGCEAPK), 471 to 485 (LEKD…KENQ), and 492 to 508 (EEGK…APED). The Myosin motor domain maps to 571–1333 (DQVEDLASLI…VISRLEKQRE (763 aa)). Residue 660 to 667 (GWSGAGKT) coordinates ATP. Residues 1208–1232 (VESRSGQESPPPPQPGRDKPGAGGP) are disordered. The interval 1213–1240 (GQESPPPPQPGRDKPGAGGPLALDIPAL) is GPA. At Ser-1216 the chain carries Phosphoserine. One can recognise an IQ domain in the interval 1336-1365 (VSQSIVLFQAACKGFLSRQEFKKLKIRRLA). 3 coiled-coil regions span residues 1396–1783 (SATI…GLIG), 1825–1961 (KTSV…STVD), and 2014–2090 (ESQQ…VASS). A tail region spans residues 1426–2083 (NELRQNTDLL…IRRIADLQAA (658 aa)). Phosphoserine is present on Ser-1829. The segment covering 2139-2153 (TMRTPSRQSATSSRI) has biased composition (polar residues). 2 disordered regions span residues 2139–2194 (TMRT…PVSP) and 2217–2249 (STER…PSAA). Basic and acidic residues predominate over residues 2158–2167 (INEEAGDTER). Over residues 2168–2185 (TQSALALSRARSTNVHSK) the composition is skewed to polar residues. The residue at position 2193 (Ser-2193) is a Phosphoserine. Positions 2227-2238 (PLASRSTNTSPL) are enriched in polar residues. 2 positions are modified to phosphoserine: Ser-2296 and Ser-2309. The interval 2357-2376 (SRPSMGRKLSSPTTPRDMLL) is disordered. Ser-2377 is modified (phosphoserine). Disordered regions lie at residues 2444 to 2471 (FLPA…SQRS) and 2494 to 2567 (KSPE…YLQK). Over residues 2494–2504 (KSPEPKEDPAH) the composition is skewed to basic and acidic residues. The span at 2506-2520 (SDSSSSSGSIVSFKS) shows a compositional bias: low complexity. The segment covering 2537-2556 (GGERTSPERREPGTGRKDDD) has biased composition (basic and acidic residues).

This sequence belongs to the TRAFAC class myosin-kinesin ATPase superfamily. Myosin family. As to quaternary structure, homodimer. May interact with F actin through the GPA motif (Gly/Pro/Ala-rich). As to expression, selectively expressed in cardiac and skeletal muscles. Weakly expressed in testis, pancreas, placenta, prostate, lung and thymus.

It localises to the cytoplasm. Its subcellular location is the nucleus. It is found in the myofibril. The protein resides in the sarcomere. Its function is as follows. May be involved in intracellular trafficking of the muscle cell when in the cytoplasm, whereas entering the nucleus, may be involved in the regulation of muscle specific genes. May play a role in the control of tumor development and progression; restored MYO18B expression in lung cancer cells suppresses anchorage-independent growth. The chain is Unconventional myosin-XVIIIb (MYO18B) from Homo sapiens (Human).